The primary structure comprises 422 residues: Serine hydroxymethyltransferase (422 aa).

Residues L113 and 117–119 (GHL) contribute to the (6S)-5,6,7,8-tetrahydrofolate site. Position 222 is an N6-(pyridoxal phosphate)lysine (K222).

Belongs to the SHMT family. Homodimer. Pyridoxal 5'-phosphate is required as a cofactor.

It is found in the cytoplasm. The catalysed reaction is (6R)-5,10-methylene-5,6,7,8-tetrahydrofolate + glycine + H2O = (6S)-5,6,7,8-tetrahydrofolate + L-serine. The protein operates within one-carbon metabolism; tetrahydrofolate interconversion. Its pathway is amino-acid biosynthesis; glycine biosynthesis; glycine from L-serine: step 1/1. In terms of biological role, catalyzes the reversible interconversion of serine and glycine with tetrahydrofolate (THF) serving as the one-carbon carrier. This reaction serves as the major source of one-carbon groups required for the biosynthesis of purines, thymidylate, methionine, and other important biomolecules. Also exhibits THF-independent aldolase activity toward beta-hydroxyamino acids, producing glycine and aldehydes, via a retro-aldol mechanism. The chain is Serine hydroxymethyltransferase from Amoebophilus asiaticus (strain 5a2).